We begin with the raw amino-acid sequence, 364 residues long: Anhydro-N-acetylmuramic acid kinase (364 aa).

11-18 (GSSLDGID) lines the ATP pocket.

It belongs to the anhydro-N-acetylmuramic acid kinase family.

It catalyses the reaction 1,6-anhydro-N-acetyl-beta-muramate + ATP + H2O = N-acetyl-D-muramate 6-phosphate + ADP + H(+). It functions in the pathway amino-sugar metabolism; 1,6-anhydro-N-acetylmuramate degradation. Its pathway is cell wall biogenesis; peptidoglycan recycling. Functionally, catalyzes the specific phosphorylation of 1,6-anhydro-N-acetylmuramic acid (anhMurNAc) with the simultaneous cleavage of the 1,6-anhydro ring, generating MurNAc-6-P. Is required for the utilization of anhMurNAc either imported from the medium or derived from its own cell wall murein, and thus plays a role in cell wall recycling. The chain is Anhydro-N-acetylmuramic acid kinase from Pseudomonas syringae pv. tomato (strain ATCC BAA-871 / DC3000).